The sequence spans 134 residues: Large ribosomal subunit protein bL20 (134 aa).

This sequence belongs to the bacterial ribosomal protein bL20 family.

In terms of biological role, binds directly to 23S ribosomal RNA and is necessary for the in vitro assembly process of the 50S ribosomal subunit. It is not involved in the protein synthesizing functions of that subunit. This is Large ribosomal subunit protein bL20 from Brucella anthropi (strain ATCC 49188 / DSM 6882 / CCUG 24695 / JCM 21032 / LMG 3331 / NBRC 15819 / NCTC 12168 / Alc 37) (Ochrobactrum anthropi).